We begin with the raw amino-acid sequence, 595 residues long: Elongation factor 4 (595 aa).

Residues 2–183 (KNIRNFCIIA…AIIERISPPT (182 aa)) form the tr-type G domain. GTP is bound by residues 14-19 (DHGKST) and 130-133 (NKID).

Belongs to the TRAFAC class translation factor GTPase superfamily. Classic translation factor GTPase family. LepA subfamily.

It is found in the cell inner membrane. The catalysed reaction is GTP + H2O = GDP + phosphate + H(+). Required for accurate and efficient protein synthesis under certain stress conditions. May act as a fidelity factor of the translation reaction, by catalyzing a one-codon backward translocation of tRNAs on improperly translocated ribosomes. Back-translocation proceeds from a post-translocation (POST) complex to a pre-translocation (PRE) complex, thus giving elongation factor G a second chance to translocate the tRNAs correctly. Binds to ribosomes in a GTP-dependent manner. In Amoebophilus asiaticus (strain 5a2), this protein is Elongation factor 4.